Reading from the N-terminus, the 322-residue chain is Probable transcription factor KAN3 (322 aa).

Residues 1 to 35 (MELFPSQPDLYLKISRRREEEQEKESQELQEQEVE) are disordered. Residues 17–35 (RREEEQEKESQELQEQEVE) show a composition bias toward basic and acidic residues. The HTH myb-type domain occupies 161-221 (GVRAPRMRWT…HLQMYRTIKS (61 aa)). Residues 192 to 217 (PKSVLELMDVQDLTLAHVKSHLQMYR) constitute a DNA-binding region (H-T-H motif). Disordered regions lie at residues 222–244 (TEKP…NSER) and 267–322 (KASS…NLSP). 2 stretches are compositionally biased toward polar residues: residues 224-241 (KPTT…SQVN) and 299-322 (LTGT…NLSP).

Expressed in developing phloem.

It is found in the nucleus. Functionally, probable transcription factor that regulates lateral organ polarity. Plays a role in lateral root formation and development. This Arabidopsis thaliana (Mouse-ear cress) protein is Probable transcription factor KAN3 (KAN3).